Here is a 302-residue protein sequence, read N- to C-terminus: Aspartate carbamoyltransferase catalytic subunit (302 aa).

Carbamoyl phosphate-binding residues include Arg51 and Thr52. Residue Lys80 coordinates L-aspartate. Residues Arg101, His129, and Gln132 each coordinate carbamoyl phosphate. L-aspartate contacts are provided by Arg162 and Arg224. Leu263 and Pro264 together coordinate carbamoyl phosphate.

It belongs to the aspartate/ornithine carbamoyltransferase superfamily. ATCase family. Heterododecamer (2C3:3R2) of six catalytic PyrB chains organized as two trimers (C3), and six regulatory PyrI chains organized as three dimers (R2).

The catalysed reaction is carbamoyl phosphate + L-aspartate = N-carbamoyl-L-aspartate + phosphate + H(+). The protein operates within pyrimidine metabolism; UMP biosynthesis via de novo pathway; (S)-dihydroorotate from bicarbonate: step 2/3. In terms of biological role, catalyzes the condensation of carbamoyl phosphate and aspartate to form carbamoyl aspartate and inorganic phosphate, the committed step in the de novo pyrimidine nucleotide biosynthesis pathway. This chain is Aspartate carbamoyltransferase catalytic subunit, found in Azobacteroides pseudotrichonymphae genomovar. CFP2.